A 73-amino-acid polypeptide reads, in one-letter code: MASTPSLIGLTYAGLAVLYLLVLPLLSLLYVDKRWTSGSAWEKVLMFFLVLFFFPGMVLLAPFMTFRPKPRSL.

2 consecutive transmembrane segments (helical) span residues 6–26 (SLIG…LPLL) and 44–64 (VLMF…APFM).

This sequence belongs to the complex I NdhL subunit family. As to quaternary structure, NDH-1 can be composed of about 15 different subunits; different subcomplexes with different compositions have been identified which probably have different functions.

The protein localises to the cellular thylakoid membrane. The enzyme catalyses a plastoquinone + NADH + (n+1) H(+)(in) = a plastoquinol + NAD(+) + n H(+)(out). It carries out the reaction a plastoquinone + NADPH + (n+1) H(+)(in) = a plastoquinol + NADP(+) + n H(+)(out). Functionally, NDH-1 shuttles electrons from an unknown electron donor, via FMN and iron-sulfur (Fe-S) centers, to quinones in the respiratory and/or the photosynthetic chain. The immediate electron acceptor for the enzyme in this species is believed to be plastoquinone. Couples the redox reaction to proton translocation, and thus conserves the redox energy in a proton gradient. Cyanobacterial NDH-1 also plays a role in inorganic carbon-concentration. This is NAD(P)H-quinone oxidoreductase subunit L from Synechococcus sp. (strain JA-2-3B'a(2-13)) (Cyanobacteria bacterium Yellowstone B-Prime).